Reading from the N-terminus, the 35-residue chain is Cupiennin-2e (35 aa).

Residue glutamate 35 is modified to Glutamic acid 1-amide.

In terms of tissue distribution, expressed by the venom gland.

The protein localises to the secreted. This Cupiennius salei (American wandering spider) protein is Cupiennin-2e.